Consider the following 287-residue polypeptide: ATP synthase gamma chain (287 aa).

This sequence belongs to the ATPase gamma chain family. F-type ATPases have 2 components, CF(1) - the catalytic core - and CF(0) - the membrane proton channel. CF(1) has five subunits: alpha(3), beta(3), gamma(1), delta(1), epsilon(1). CF(0) has three main subunits: a, b and c.

Its subcellular location is the cell inner membrane. Its function is as follows. Produces ATP from ADP in the presence of a proton gradient across the membrane. The gamma chain is believed to be important in regulating ATPase activity and the flow of protons through the CF(0) complex. In Xylella fastidiosa (strain 9a5c), this protein is ATP synthase gamma chain.